Consider the following 143-residue polypeptide: Nucleoside diphosphate kinase (143 aa).

ATP is bound by residues Lys-11, Phe-59, Arg-87, Thr-93, Arg-104, and Asn-114. His-117 (pros-phosphohistidine intermediate) is an active-site residue.

It belongs to the NDK family. In terms of assembly, homotetramer. Requires Mg(2+) as cofactor.

It localises to the cytoplasm. It carries out the reaction dZDP + ATP = dZTP + ADP. The enzyme catalyses a 2'-deoxyribonucleoside 5'-diphosphate + ATP = a 2'-deoxyribonucleoside 5'-triphosphate + ADP. It catalyses the reaction a ribonucleoside 5'-diphosphate + ATP = a ribonucleoside 5'-triphosphate + ADP. Its pathway is purine metabolism. Functionally, major role in the synthesis of nucleoside triphosphates other than ATP. The ATP gamma phosphate is transferred to the NDP beta phosphate via a ping-pong mechanism, using a phosphorylated active-site intermediate. Its function is as follows. (Microbial infection) Catalyzes the phosphorylation of dZDP to dZTP, when the bacterium is infected by a phage that produces the substrate for the synthesis of dZTP (2- amino-2'-deoxyadenosine 5'-triphosphate), which is then used by the phage as a DNA polymerase substrate. This chain is Nucleoside diphosphate kinase, found in Acinetobacter baumannii (strain AB307-0294).